Here is a 245-residue protein sequence, read N- to C-terminus: MSVCSSDLSYGSRVCLPGSCDSCSDSWQVDDCPESCCEPPCCAPAPCLSLVCTPVSRVSSPCCRVTCEPSPCQSGCTSSCTPSCCQQSSCQPACCTSSPCQQACCVPVCCKTVCCKPVCCMPVCCGPSSSCCQQSSCQPACCISSPCQQSCCVPVCCKPICCVPVCSGASSLCCQQSSCQPACCTTSCCRPSSSVSLLCRPVCRPARRVPVPSCCVPTSSCQPSCGRLASCGSLLCRPTCSRLAC.

Tandem repeats lie at residues 36–40, 41–45, 62–66, 84–88, 94–98, 104–108, 109–113, 114–118, 119–123, 124–128, 131–135, 141–145, 151–155, 156–160, 161–165, 173–177, 183–187, 188–192, and 214–218. The interval 36–218 is 19 X 5 AA repeats of C-C-X(3); that stretch reads CCEPPCCAPA…VPVPSCCVPT (183 aa).

This sequence belongs to the KRTAP type 10 family. As to quaternary structure, interacts with hair keratins. In terms of tissue distribution, restricted to a narrow region of the hair fiber cuticle, lying approximately 20 cell layers above the apex of the dermal papilla of the hair root; not detected in any other tissues.

Its function is as follows. In the hair cortex, hair keratin intermediate filaments are embedded in an interfilamentous matrix, consisting of hair keratin-associated proteins (KRTAP), which are essential for the formation of a rigid and resistant hair shaft through their extensive disulfide bond cross-linking with abundant cysteine residues of hair keratins. The matrix proteins include the high-sulfur and high-glycine-tyrosine keratins. The chain is Keratin-associated protein 10-12 (KRTAP10-12) from Homo sapiens (Human).